The chain runs to 243 residues: Type III pantothenate kinase (243 aa).

6-13 (DGGNTFIK) provides a ligand contact to ATP. Substrate is bound by residues Tyr-87 and 94–97 (GKDR). Asp-96 functions as the Proton acceptor in the catalytic mechanism. Residue Asp-117 participates in K(+) binding. Position 120 (Thr-120) interacts with ATP. Thr-172 provides a ligand contact to substrate.

Belongs to the type III pantothenate kinase family. As to quaternary structure, homodimer. NH4(+) serves as cofactor. K(+) is required as a cofactor.

Its subcellular location is the cytoplasm. It carries out the reaction (R)-pantothenate + ATP = (R)-4'-phosphopantothenate + ADP + H(+). It participates in cofactor biosynthesis; coenzyme A biosynthesis; CoA from (R)-pantothenate: step 1/5. Its function is as follows. Catalyzes the phosphorylation of pantothenate (Pan), the first step in CoA biosynthesis. The chain is Type III pantothenate kinase from Christiangramia forsetii (strain DSM 17595 / CGMCC 1.15422 / KT0803) (Gramella forsetii).